A 395-amino-acid chain; its full sequence is Elongation factor Tu (395 aa).

Residues K10–E204 enclose the tr-type G domain. The segment at G19–T26 is G1. Position 19-26 (G19–T26) interacts with GTP. T26 provides a ligand contact to Mg(2+). A G2 region spans residues G60 to S64. Positions D81–G84 are G3. GTP contacts are provided by residues D81–H85 and N136–D139. Residues N136–D139 form a G4 region. Residues S174–L176 form a G5 region.

The protein belongs to the TRAFAC class translation factor GTPase superfamily. Classic translation factor GTPase family. EF-Tu/EF-1A subfamily. In terms of assembly, monomer.

It localises to the cytoplasm. It carries out the reaction GTP + H2O = GDP + phosphate + H(+). Functionally, GTP hydrolase that promotes the GTP-dependent binding of aminoacyl-tRNA to the A-site of ribosomes during protein biosynthesis. The sequence is that of Elongation factor Tu from Listeria monocytogenes serotype 4b (strain CLIP80459).